A 152-amino-acid polypeptide reads, in one-letter code: Lipoprotein signal peptidase (152 aa).

Transmembrane regions (helical) follow at residues 5–25 (LFVL…FWIV), 61–81 (WFFV…LATH), and 84–104 (LNIW…GNFI). Residues aspartate 114 and aspartate 130 contribute to the active site. The chain crosses the membrane as a helical span at residues 125 to 145 (IFNVADSYLTVGVILLLICLW).

The protein belongs to the peptidase A8 family.

Its subcellular location is the cell membrane. The catalysed reaction is Release of signal peptides from bacterial membrane prolipoproteins. Hydrolyzes -Xaa-Yaa-Zaa-|-(S,diacylglyceryl)Cys-, in which Xaa is hydrophobic (preferably Leu), and Yaa (Ala or Ser) and Zaa (Gly or Ala) have small, neutral side chains.. Its pathway is protein modification; lipoprotein biosynthesis (signal peptide cleavage). In terms of biological role, this protein specifically catalyzes the removal of signal peptides from prolipoproteins. The chain is Lipoprotein signal peptidase from Streptococcus pyogenes serotype M1.